Consider the following 173-residue polypeptide: Small ribosomal subunit protein mS25 (173 aa).

It belongs to the mitochondrion-specific ribosomal protein mS25 family. Component of the mitochondrial ribosome small subunit (28S) which comprises a 12S rRNA and about 30 distinct proteins.

The protein resides in the mitochondrion. The protein is Small ribosomal subunit protein mS25 (MRPS25) of Bos taurus (Bovine).